Consider the following 324-residue polypeptide: Probable UDP-sugar transporter protein SLC35A4 (324 aa).

Residues 1 to 18 lie on the Cytoplasmic side of the membrane; sequence MSVEDGGVPGLARPRQAR. Residues 19–39 form a helical membrane-spanning segment; it reads WTLLLFLSTAMYGAHAPFLAL. Residues 40-52 are Lumenal-facing; the sequence is CHVDGRVPFRPSS. The chain crosses the membrane as a helical span at residues 53 to 73; that stretch reads AVLLTELTKLLLCAFSLLVGW. Residues 74–85 lie on the Cytoplasmic side of the membrane; the sequence is QTWPQGTPPWRQ. A helical transmembrane segment spans residues 86–106; sequence AVPFALSALLYGANNNLVIYL. The Lumenal portion of the chain corresponds to 107-142; the sequence is QRYMDPSTYQVLSNLKIGSTALLYCLCLGHRLSARQ. The chain crosses the membrane as a helical span at residues 143-163; sequence GLALLLLMAAGACYASGGFQE. Over 164 to 180 the chain is Cytoplasmic; it reads PVNTLPGPASAAGAHPM. Residues 181–201 traverse the membrane as a helical segment; it reads PLHITPLGLLLLILYCLISGL. At 202–214 the chain is on the lumenal side; sequence SSVYTELIMKRQR. The helical transmembrane segment at 215–235 threads the bilayer; that stretch reads LPLALQNLFLYTFGVILNFGL. The Cytoplasmic portion of the chain corresponds to 236–248; the sequence is YAGSGPGPGFLEG. The helical transmembrane segment at 249 to 271 threads the bilayer; the sequence is FSGWAVLVVLNQAVNGLLMSAVM. The Lumenal segment spans residues 272-279; sequence KHGSSITR. A helical transmembrane segment spans residues 280–300; that stretch reads LFIVSCSLVVNAVLSAVLLQL. The Cytoplasmic portion of the chain corresponds to 301 to 324; that stretch reads QLTAIFFLAALLIGLAVCLYYGSP.

It belongs to the nucleotide-sugar transporter family. SLC35A subfamily. As to quaternary structure, found in a complex with SLC35A2 and SLC35A3.

It is found in the golgi apparatus membrane. It carries out the reaction CDP-L-ribitol(in) + CDP(out) = CDP-L-ribitol(out) + CDP(in). Mediates the transport of CDP-ribitol. Does not exhibit CMP-sialic acid, UDP-galactose and UDP-N-acetylglucosamine transport activity. The polypeptide is Probable UDP-sugar transporter protein SLC35A4 (Mus musculus (Mouse)).